A 79-amino-acid polypeptide reads, in one-letter code: ATP synthase subunit c (79 aa).

The next 2 membrane-spanning stretches (helical) occupy residues 11–31 (ISAAIIMGFASIGAAIGIGIL) and 55–75 (IVMGLVDAIPMISVGLGLYLI).

Belongs to the ATPase C chain family. F-type ATPases have 2 components, F(1) - the catalytic core - and F(0) - the membrane proton channel. F(1) has five subunits: alpha(3), beta(3), gamma(1), delta(1), epsilon(1). F(0) has three main subunits: a(1), b(2) and c(10-14). The alpha and beta chains form an alternating ring which encloses part of the gamma chain. F(1) is attached to F(0) by a central stalk formed by the gamma and epsilon chains, while a peripheral stalk is formed by the delta and b chains.

It is found in the cell membrane. Its function is as follows. F(1)F(0) ATP synthase produces ATP from ADP in the presence of a proton or sodium gradient. F-type ATPases consist of two structural domains, F(1) containing the extramembraneous catalytic core and F(0) containing the membrane proton channel, linked together by a central stalk and a peripheral stalk. During catalysis, ATP synthesis in the catalytic domain of F(1) is coupled via a rotary mechanism of the central stalk subunits to proton translocation. In terms of biological role, key component of the F(0) channel; it plays a direct role in translocation across the membrane. A homomeric c-ring of between 10-14 subunits forms the central stalk rotor element with the F(1) delta and epsilon subunits. This Wigglesworthia glossinidia brevipalpis protein is ATP synthase subunit c.